A 507-amino-acid chain; its full sequence is Maturase K (507 aa).

The protein belongs to the intron maturase 2 family. MatK subfamily.

The protein localises to the plastid. Its subcellular location is the chloroplast. Usually encoded in the trnK tRNA gene intron. Probably assists in splicing its own and other chloroplast group II introns. In Cupaniopsis anacardioides (Carrotwood), this protein is Maturase K.